A 77-amino-acid chain; its full sequence is MKVAANTSKMLVEKLDLLKGGRRRRRRSRRRRRSRRRRSRSPYRRRYRRRRRRRRSRRRRRYRRRRSYSRRRYRRRR.

The tract at residues 1-21 is hydrophobic; the sequence is MKVAANTSKMLVEKLDLLKGG. The interval 1 to 77 is disordered; that stretch reads MKVAANTSKM…YSRRRYRRRR (77 aa). Residues 20–77 are compositionally biased toward basic residues; sequence GGRRRRRRSRRRRRSRRRRSRSPYRRRYRRRRRRRRSRRRRRYRRRRSYSRRRYRRRR.

Post-translationally, phosphorylation occurs at different degrees. The triphosphorylated form may be predominant in T2. SP2 appears to be phosphorylated in elongated spermatids, but dephosphorylated in mature sperm cells. In terms of tissue distribution, testis.

It is found in the nucleus. Its subcellular location is the chromosome. Cuttlefish spermiogenesis is characterized by a double nuclear protein transition: histones -&gt; spermatid-specific proteins (T1/T2) -&gt; protamines (SP1/SP2). The protamines compact sperm DNA into a highly condensed, stable and inactive complex. In Sepia officinalis (Common cuttlefish), this protein is Spermatid-specific protein T2.